The primary structure comprises 380 residues: NF-kappa-B inhibitor-like protein 1 (380 aa).

The tract at residues Met-1 to Glu-34 is disordered. 2 ANK repeats span residues Gly-64–His-93 and His-97–Lys-133. Disordered regions lie at residues Lys-131 to Gln-166 and Gly-185 to Leu-293. Position 150 is a phosphoserine (Ser-150). The segment covering Gln-237 to Arg-286 has biased composition (basic and acidic residues).

As to quaternary structure, interacts with CACTIN (via N-terminal domain); the interaction occurs in a pro-inflammatory-independent manner.

The protein resides in the nucleus. Its function is as follows. Involved in the regulation of innate immune response. Acts as negative regulator of Toll-like receptor and interferon-regulatory factor (IRF) signaling pathways. Contributes to the negative regulation of transcriptional activation of NF-kappa-B target genes in response to endogenous pro-inflammatory stimuli. The chain is NF-kappa-B inhibitor-like protein 1 (NFKBIL1) from Pan troglodytes (Chimpanzee).